Consider the following 366-residue polypeptide: Histidinol-phosphate aminotransferase (366 aa).

Lys228 bears the N6-(pyridoxal phosphate)lysine mark.

It belongs to the class-II pyridoxal-phosphate-dependent aminotransferase family. Histidinol-phosphate aminotransferase subfamily. In terms of assembly, homodimer. Pyridoxal 5'-phosphate is required as a cofactor.

It catalyses the reaction L-histidinol phosphate + 2-oxoglutarate = 3-(imidazol-4-yl)-2-oxopropyl phosphate + L-glutamate. It functions in the pathway amino-acid biosynthesis; L-histidine biosynthesis; L-histidine from 5-phospho-alpha-D-ribose 1-diphosphate: step 7/9. This is Histidinol-phosphate aminotransferase from Campylobacter fetus subsp. fetus (strain 82-40).